A 121-amino-acid polypeptide reads, in one-letter code: MPRVKRGTKRRAKRKKILERASGYYLTKSKLYRSAKESVERALKFAYTGRKQKKRQYRSIWIVRIGAAAKLNGLSYSRFISGLKKAGVELDRKMLSEIAIHDPQAFAVLAEQAKAAQPAAA.

Belongs to the bacterial ribosomal protein bL20 family.

Its function is as follows. Binds directly to 23S ribosomal RNA and is necessary for the in vitro assembly process of the 50S ribosomal subunit. It is not involved in the protein synthesizing functions of that subunit. This is Large ribosomal subunit protein bL20 from Koribacter versatilis (strain Ellin345).